We begin with the raw amino-acid sequence, 659 residues long: Ion-translocating oxidoreductase complex subunit C (659 aa).

4Fe-4S ferredoxin-type domains lie at 366-397 (TEMG…QQLY) and 407-436 (KARN…VQYY). [4Fe-4S] cluster-binding residues include Cys377, Cys380, Cys383, Cys387, Cys416, Cys419, Cys422, and Cys426.

This sequence belongs to the 4Fe4S bacterial-type ferredoxin family. RnfC subfamily. As to quaternary structure, the complex is composed of six subunits: RnfA, RnfB, RnfC, RnfD, RnfE and RnfG. The cofactor is [4Fe-4S] cluster.

Its subcellular location is the cell inner membrane. Functionally, part of a membrane-bound complex that couples electron transfer with translocation of ions across the membrane. This is Ion-translocating oxidoreductase complex subunit C from Yersinia pestis bv. Antiqua (strain Nepal516).